Consider the following 440-residue polypeptide: Protein disulfide-isomerase A6 homolog (440 aa).

A signal peptide spans 1-18; the sequence is MALIKLLLASLAITSVCG. 2 Thioredoxin domains span residues 19 to 131 and 127 to 273; these read MYSK…AEAK and LAEA…ARAQ. Residues cysteine 54 and cysteine 57 each act as nucleophile in the active site. Residues cysteine 54 and cysteine 57 are joined by a disulfide bond. Residues 138-164 are disordered; the sequence is LGGKSSGSSSSGSGSGSGKRGGGGSGN. Residues 139–149 show a composition bias toward low complexity; it reads GGKSSGSSSSG. Over residues 150–163 the composition is skewed to gly residues; the sequence is SGSGSGKRGGGGSG. Catalysis depends on nucleophile residues cysteine 194 and cysteine 197. Cysteines 194 and 197 form a disulfide. Residues 404–426 are disordered; sequence DGFPKIQKTEKWDGKDGALPAED. Residues 410–419 are compositionally biased toward basic and acidic residues; the sequence is QKTEKWDGKD. The Prevents secretion from ER signature appears at 437–440; it reads KTEL.

It belongs to the protein disulfide isomerase family.

Its subcellular location is the endoplasmic reticulum lumen. It carries out the reaction Catalyzes the rearrangement of -S-S- bonds in proteins.. Functionally, may function as a chaperone that inhibits aggregation of misfolded proteins. May negatively regulate the unfolded protein response (UPR) through binding to UPR sensors. The chain is Protein disulfide-isomerase A6 homolog from Caenorhabditis elegans.